Here is a 317-residue protein sequence, read N- to C-terminus: Taste receptor type 2 member 14 (317 aa).

Topologically, residues 1 to 7 (MGGVIKS) are extracellular. A helical membrane pass occupies residues 8–28 (IFTFVLIVEFIIGNLGNSFIA). Over 29 to 55 (LVNCIDWVKGRKISSVDRILTALAISR) the chain is Cytoplasmic. Residues 56–76 (ISLVWLIFGSWCVSVFFPALF) form a helical membrane-spanning segment. Residues 77-87 (ATEKMFRMLTN) are Extracellular-facing. Cholesterol is bound by residues threonine 86 and tryptophan 89. The chain crosses the membrane as a helical span at residues 88–108 (IWTVINHFSVWLATGLGTFYF). The Cytoplasmic portion of the chain corresponds to 109 to 129 (LKIANFSNSIFLYLKWRVKKV). Residues 130–150 (VLVLLLVTSVFLFLNIALINI) form a helical membrane-spanning segment. The Extracellular portion of the chain corresponds to 151–184 (HINASINGYRRNKTCSSDSSNFTRFSSLIVLTST). 3 N-linked (GlcNAc...) asparagine glycosylation sites follow: asparagine 153, asparagine 162, and asparagine 171. Residue valine 180 coordinates cholesterol. Residues 185-205 (VFIFIPFTLSLAMFLLLIFSM) traverse the membrane as a helical segment. Residues 206–232 (WKHRKKMQHTVKISGDASTKAHRGVKS) lie on the Cytoplasmic side of the membrane. Residues 233–253 (VITFFLLYAIFSLSFFISVWT) traverse the membrane as a helical segment. At 254–261 (SERLEENL) the chain is on the extracellular side. Residues 262–282 (IILSQVMGMAYPSCHSCVLIL) traverse the membrane as a helical segment. Residues serine 265 and methionine 268 each coordinate cholesterol. The Cytoplasmic segment spans residues 283-317 (GNKKLRQASLSVLLWLRYMFKDGEPSGHKEFRESS).

The protein belongs to the G-protein coupled receptor T2R family. In terms of assembly, core component of the TAS2R14-GNAI1 complex, consisting of TAS2R14, GNAI1, GNB1 and GNG2; within the complex interacts with GNAI1. Core component of the TAS2R14-GNAT3 complex, consisting of TAS2R14, GNAT3, GNB1 and GNG2; within the complex interacts with GNAT3. Core component of the TAS2R14-GNAS2 complex, consisting of TAS2R14, GNAS2, GNB1 and GNG2; within the complex interacts with GNAS2. Highly expressed in cerebellum, pancreas, small intestine and thymus; also expressed in adipose, aorta, skin and tongue, but at significantly lower levels. Expressed in subsets of taste receptor cells of the tongue and palate epithelium and exclusively in gustducin-positive cells. Expressed in testis.

It is found in the membrane. The enzyme catalyses Ca(2+)(in) = Ca(2+)(out). It carries out the reaction 3',5'-cyclic AMP(in) = 3',5'-cyclic AMP(out). Its activity is regulated as follows. Basal activity is enhanced by binding to bitter tastants, such as flufenamic acid and aristolochic acid. Regulated by cholesterol in a concentration-dependent manner. Gustducin-linked G-protein coupled receptor that plays a role in the perception of bitterness. The activity of this receptor stimulates GNAT3, activating the gustducin G-protein pathway. Likely plays a role in sensing the chemical composition of the gastrointestinal content and other extra-oral tissues via the inhibitory G-protein pathways. The protein is Taste receptor type 2 member 14 (TAS2R14) of Homo sapiens (Human).